The primary structure comprises 1408 residues: TSET complex member tstA (1408 aa).

Disordered regions lie at residues 259 to 347, 998 to 1055, and 1091 to 1139; these read FWPT…SIIA, QQSS…AVGS, and SSSS…TNLN. The segment covering 266 to 308 has biased composition (low complexity); sequence NNNNNNNNQQINNNNNNNNNNNNNNNNNNNNNNNNNNNNNQNN. Over residues 309–318 the composition is skewed to polar residues; that stretch reads LINGISSMNL. 2 stretches are compositionally biased toward low complexity: residues 319–347 and 998–1051; these read SSIT…SIIA and QQSS…ISTS.

The protein belongs to the TPLATE family. In terms of assembly, component of the TSET complex, a heterohexamer composed of tstA, tstB, tstC, tstD, tstE and tstF, which may act in plasma membrane turnover. tstA, tstB, tstC and tstD are likely to be the core complex members with tstE and tstF acting as associated scaffold proteins.

This is TSET complex member tstA from Dictyostelium discoideum (Social amoeba).